We begin with the raw amino-acid sequence, 233 residues long: Orotidine 5'-phosphate decarboxylase (233 aa).

Residues aspartate 9, lysine 31, 58–67 (DLKLHDIPNT), threonine 120, arginine 182, glutamine 191, glycine 211, and arginine 212 each bind substrate. The active-site Proton donor is lysine 60.

It belongs to the OMP decarboxylase family. Type 1 subfamily. Homodimer.

It catalyses the reaction orotidine 5'-phosphate + H(+) = UMP + CO2. It functions in the pathway pyrimidine metabolism; UMP biosynthesis via de novo pathway; UMP from orotate: step 2/2. Catalyzes the decarboxylation of orotidine 5'-monophosphate (OMP) to uridine 5'-monophosphate (UMP). The sequence is that of Orotidine 5'-phosphate decarboxylase from Listeria welshimeri serovar 6b (strain ATCC 35897 / DSM 20650 / CCUG 15529 / CIP 8149 / NCTC 11857 / SLCC 5334 / V8).